A 236-amino-acid polypeptide reads, in one-letter code: Proteasome subunit alpha (236 aa).

The protein belongs to the peptidase T1A family. In terms of assembly, the 20S proteasome core is composed of 14 alpha and 14 beta subunits that assemble into four stacked heptameric rings, resulting in a barrel-shaped structure. The two inner rings, each composed of seven catalytic beta subunits, are sandwiched by two outer rings, each composed of seven alpha subunits. The catalytic chamber with the active sites is on the inside of the barrel. Has a gated structure, the ends of the cylinder being occluded by the N-termini of the alpha-subunits. Is capped by the proteasome-associated ATPase, ARC.

It is found in the cytoplasm. The protein operates within protein degradation; proteasomal Pup-dependent pathway. Its activity is regulated as follows. The formation of the proteasomal ATPase ARC-20S proteasome complex, likely via the docking of the C-termini of ARC into the intersubunit pockets in the alpha-rings, may trigger opening of the gate for substrate entry. Interconversion between the open-gate and close-gate conformations leads to a dynamic regulation of the 20S proteasome proteolysis activity. Component of the proteasome core, a large protease complex with broad specificity involved in protein degradation. This chain is Proteasome subunit alpha, found in Jonesia denitrificans (strain ATCC 14870 / DSM 20603 / BCRC 15368 / CIP 55.134 / JCM 11481 / NBRC 15587 / NCTC 10816 / Prevot 55134) (Listeria denitrificans).